We begin with the raw amino-acid sequence, 286 residues long: Formamidopyrimidine-DNA glycosylase (286 aa).

P2 serves as the catalytic Schiff-base intermediate with DNA. E3 functions as the Proton donor in the catalytic mechanism. K60 serves as the catalytic Proton donor; for beta-elimination activity. The DNA site is built by H103, R122, and R167. The FPG-type zinc-finger motif lies at 252–286 (WVYRRNQKPCRKCGTLIEKTKVAGRSTHWCPNCQN). R276 serves as the catalytic Proton donor; for delta-elimination activity.

This sequence belongs to the FPG family. Monomer. The cofactor is Zn(2+).

It catalyses the reaction Hydrolysis of DNA containing ring-opened 7-methylguanine residues, releasing 2,6-diamino-4-hydroxy-5-(N-methyl)formamidopyrimidine.. The catalysed reaction is 2'-deoxyribonucleotide-(2'-deoxyribose 5'-phosphate)-2'-deoxyribonucleotide-DNA = a 3'-end 2'-deoxyribonucleotide-(2,3-dehydro-2,3-deoxyribose 5'-phosphate)-DNA + a 5'-end 5'-phospho-2'-deoxyribonucleoside-DNA + H(+). Its function is as follows. Involved in base excision repair of DNA damaged by oxidation or by mutagenic agents. Acts as a DNA glycosylase that recognizes and removes damaged bases. Has a preference for oxidized purines, such as 7,8-dihydro-8-oxoguanine (8-oxoG). Has AP (apurinic/apyrimidinic) lyase activity and introduces nicks in the DNA strand. Cleaves the DNA backbone by beta-delta elimination to generate a single-strand break at the site of the removed base with both 3'- and 5'-phosphates. This chain is Formamidopyrimidine-DNA glycosylase, found in Prochlorococcus marinus (strain MIT 9211).